A 123-amino-acid polypeptide reads, in one-letter code: Large ribosomal subunit protein uL14 (123 aa).

Belongs to the universal ribosomal protein uL14 family. As to quaternary structure, part of the 50S ribosomal subunit. Forms a cluster with proteins L3 and L19. In the 70S ribosome, L14 and L19 interact and together make contacts with the 16S rRNA in bridges B5 and B8.

Its function is as follows. Binds to 23S rRNA. Forms part of two intersubunit bridges in the 70S ribosome. The sequence is that of Large ribosomal subunit protein uL14 from Pectobacterium atrosepticum (strain SCRI 1043 / ATCC BAA-672) (Erwinia carotovora subsp. atroseptica).